A 468-amino-acid polypeptide reads, in one-letter code: Cytochrome P450-like protein L532 (468 aa).

2 helical membrane passes run 22-42 (WFAY…FGLI) and 172-192 (VTVL…GVDV). Cys415 is a binding site for heme.

Belongs to the cytochrome P450 family. Heme serves as cofactor.

Its subcellular location is the host membrane. It is found in the virion. This chain is Cytochrome P450-like protein L532, found in Acanthamoeba polyphaga mimivirus (APMV).